A 326-amino-acid chain; its full sequence is Tryptophan--tRNA ligase (326 aa).

ATP is bound by residues glutamine 11–threonine 13 and glycine 19–asparagine 20. The 'HIGH' region motif lies at proline 12–asparagine 20. An L-tryptophan-binding site is contributed by aspartate 135. ATP-binding positions include glycine 147–aspartate 149, valine 186, and lysine 195–serine 199. Residues lysine 195–serine 199 carry the 'KMSKS' region motif.

The protein belongs to the class-I aminoacyl-tRNA synthetase family. Homodimer.

Its subcellular location is the cytoplasm. It catalyses the reaction tRNA(Trp) + L-tryptophan + ATP = L-tryptophyl-tRNA(Trp) + AMP + diphosphate + H(+). In terms of biological role, catalyzes the attachment of tryptophan to tRNA(Trp). This Helicobacter pylori (strain ATCC 700392 / 26695) (Campylobacter pylori) protein is Tryptophan--tRNA ligase.